A 122-amino-acid chain; its full sequence is Large ribosomal subunit protein uL18 (122 aa).

The protein belongs to the universal ribosomal protein uL18 family. Part of the 50S ribosomal subunit; part of the 5S rRNA/L5/L18/L25 subcomplex. Contacts the 5S and 23S rRNAs.

Its function is as follows. This is one of the proteins that bind and probably mediate the attachment of the 5S RNA into the large ribosomal subunit, where it forms part of the central protuberance. The sequence is that of Large ribosomal subunit protein uL18 from Ruminiclostridium cellulolyticum (strain ATCC 35319 / DSM 5812 / JCM 6584 / H10) (Clostridium cellulolyticum).